We begin with the raw amino-acid sequence, 86 residues long: Insulin-related peptide 2 (86 aa).

The N-terminal stretch at 1-19 (MKFYIVFALILACAACVSS) is a signal peptide. Positions 20-43 (QEGTNFYCGRQLSRTLALVCWGAE) are excised as a propeptide. Position 63 is an arginine amide (R63). Positions 67-86 (GPVDECCLKPCSIEEMLTYC) are excised as a propeptide.

This sequence belongs to the insulin family. DAGWWVPPQSARALGGGR-amide: Expressed in corpora cardiaca (CC), corpora allata (CA), antennal lobe (AL) and gnathal ganglion (GNG) (at protein level). Expression in CC and CA detected in most animals, in AL in some animals and in GNG in few animals (at protein level).

The protein localises to the secreted. This chain is Insulin-related peptide 2, found in Agrotis ipsilon (Black cutworm moth).